The following is a 542-amino-acid chain: CTP synthase (542 aa).

The segment at 1 to 265 (MARYVFITGG…DDEVLAAFGI (265 aa)) is amidoligase domain. Ser13 is a CTP binding site. Residue Ser13 coordinates UTP. ATP is bound by residues 14-19 (SLGKGI) and Asp71. The Mg(2+) site is built by Asp71 and Glu139. CTP is bound by residues 146–148 (DIE), 186–191 (KTKPTQ), and Lys222. UTP-binding positions include 186 to 191 (KTKPTQ) and Lys222. The Glutamine amidotransferase type-1 domain occupies 291–541 (TIAIVGKYTG…IEAATEQSRL (251 aa)). An L-glutamine-binding site is contributed by Gly353. The active-site Nucleophile; for glutamine hydrolysis is the Cys380. L-glutamine is bound by residues 381–384 (FGMQ), Glu404, and Arg469. Active-site residues include His514 and Glu516.

The protein belongs to the CTP synthase family. As to quaternary structure, homotetramer.

The catalysed reaction is UTP + L-glutamine + ATP + H2O = CTP + L-glutamate + ADP + phosphate + 2 H(+). It catalyses the reaction L-glutamine + H2O = L-glutamate + NH4(+). It carries out the reaction UTP + NH4(+) + ATP = CTP + ADP + phosphate + 2 H(+). Its pathway is pyrimidine metabolism; CTP biosynthesis via de novo pathway; CTP from UDP: step 2/2. With respect to regulation, allosterically activated by GTP, when glutamine is the substrate; GTP has no effect on the reaction when ammonia is the substrate. The allosteric effector GTP functions by stabilizing the protein conformation that binds the tetrahedral intermediate(s) formed during glutamine hydrolysis. Inhibited by the product CTP, via allosteric rather than competitive inhibition. In terms of biological role, catalyzes the ATP-dependent amination of UTP to CTP with either L-glutamine or ammonia as the source of nitrogen. Regulates intracellular CTP levels through interactions with the four ribonucleotide triphosphates. This Rhizobium leguminosarum bv. trifolii (strain WSM2304) protein is CTP synthase.